The following is a 364-amino-acid chain: tRNA-specific 2-thiouridylase MnmA (364 aa).

ATP is bound by residues 6 to 13 and Leu-32; that span reads AMSGGVDS. The Nucleophile role is filled by Cys-101. An intrachain disulfide couples Cys-101 to Cys-193. Gly-125 is an ATP binding site. The segment at 143-145 is interaction with tRNA; it reads KDQ. Residue Cys-193 is the Cysteine persulfide intermediate of the active site.

It belongs to the MnmA/TRMU family.

It localises to the cytoplasm. It catalyses the reaction S-sulfanyl-L-cysteinyl-[protein] + uridine(34) in tRNA + AH2 + ATP = 2-thiouridine(34) in tRNA + L-cysteinyl-[protein] + A + AMP + diphosphate + H(+). Catalyzes the 2-thiolation of uridine at the wobble position (U34) of tRNA, leading to the formation of s(2)U34. In Rhodococcus opacus (strain B4), this protein is tRNA-specific 2-thiouridylase MnmA.